The sequence spans 296 residues: Light-independent protochlorophyllide reductase iron-sulfur ATP-binding protein (296 aa).

Residues 10 to 15 (GIGKST) and Lys39 contribute to the ATP site. Ser14 contacts Mg(2+). [4Fe-4S] cluster is bound by residues Cys95 and Cys129. 180 to 181 (NR) lines the ATP pocket.

It belongs to the NifH/BchL/ChlL family. As to quaternary structure, homodimer. Protochlorophyllide reductase is composed of three subunits; ChlL, ChlN and ChlB. [4Fe-4S] cluster serves as cofactor.

The protein localises to the plastid. The protein resides in the chloroplast. It catalyses the reaction chlorophyllide a + oxidized 2[4Fe-4S]-[ferredoxin] + 2 ADP + 2 phosphate = protochlorophyllide a + reduced 2[4Fe-4S]-[ferredoxin] + 2 ATP + 2 H2O. It participates in porphyrin-containing compound metabolism; chlorophyll biosynthesis (light-independent). Functionally, component of the dark-operative protochlorophyllide reductase (DPOR) that uses Mg-ATP and reduced ferredoxin to reduce ring D of protochlorophyllide (Pchlide) to form chlorophyllide a (Chlide). This reaction is light-independent. The L component serves as a unique electron donor to the NB-component of the complex, and binds Mg-ATP. This Mesostigma viride (Green alga) protein is Light-independent protochlorophyllide reductase iron-sulfur ATP-binding protein.